The chain runs to 183 residues: 2-epi-5-epi-valiolone epimerase (183 aa).

Positions A11–L155 constitute a VOC domain. 4 residues coordinate a divalent metal cation: H14, E76, H99, and E151.

Homodimer. It depends on a divalent metal cation as a cofactor.

It catalyses the reaction 2-epi-5-epi-valiolone = 5-epi-valiolone. It functions in the pathway antibiotic biosynthesis. Catalyzes the epimerization of 2-epi-5-epi-valiolone to 5-epi-valiolone. Involved in cetoniacytone A biosynthesis. The chain is 2-epi-5-epi-valiolone epimerase from Actinomyces sp.